The sequence spans 42 residues: Photosystem II reaction center protein J (42 aa).

Residues 10–30 (IPLWLVGTVAGTAAIGLLGIF) form a helical membrane-spanning segment.

Belongs to the PsbJ family. PSII is composed of 1 copy each of membrane proteins PsbA, PsbB, PsbC, PsbD, PsbE, PsbF, PsbH, PsbI, PsbJ, PsbK, PsbL, PsbM, PsbT, PsbX, PsbY, PsbZ, Psb30/Ycf12, at least 3 peripheral proteins of the oxygen-evolving complex and a large number of cofactors. It forms dimeric complexes.

The protein resides in the plastid. It is found in the chloroplast thylakoid membrane. In terms of biological role, one of the components of the core complex of photosystem II (PSII). PSII is a light-driven water:plastoquinone oxidoreductase that uses light energy to abstract electrons from H(2)O, generating O(2) and a proton gradient subsequently used for ATP formation. It consists of a core antenna complex that captures photons, and an electron transfer chain that converts photonic excitation into a charge separation. In Pleurastrum terricola (Filamentous green alga), this protein is Photosystem II reaction center protein J.